The primary structure comprises 341 residues: HTH-type transcriptional repressor CytR (341 aa).

An HTH lacI-type domain is found at Ala10–Arg64. The segment at residues Met12–Met31 is a DNA-binding region (H-T-H motif).

Its function is as follows. This protein negatively controls the transcription initiation of genes such as deoCABD, udp, and cdd encoding catabolizing enzymes and nupC, nupG, and tsx encoding transporting and pore-forming proteins. Binds cytidine and adenosine as effectors. The polypeptide is HTH-type transcriptional repressor CytR (cytR) (Escherichia coli (strain K12)).